A 549-amino-acid polypeptide reads, in one-letter code: Cation/acetate symporter ActP (549 aa).

13 helical membrane passes run 33–53 (WQAI…TYWA), 77–97 (LAIA…ALVF), 103–123 (GLIY…LIAE), 148–168 (ILSA…QMVG), 183–203 (IAVV…GMLA), 206–226 (WVQI…AFMV), 262–282 (ISAL…PHIL), 303–323 (GFMG…IMLV), 355–375 (LFLG…VAGL), 404–424 (VSKI…VLFE), 428–448 (IAFM…PIIL), 464–484 (GGWL…TIWV), and 493–513 (IFPY…GIWF).

Belongs to the sodium:solute symporter (SSF) (TC 2.A.21) family.

The protein localises to the cell inner membrane. Its function is as follows. Transports acetate. The polypeptide is Cation/acetate symporter ActP (Salmonella agona (strain SL483)).